The primary structure comprises 242 residues: Small ribosomal subunit protein uS2 (242 aa).

The protein belongs to the universal ribosomal protein uS2 family.

This Vibrio parahaemolyticus serotype O3:K6 (strain RIMD 2210633) protein is Small ribosomal subunit protein uS2.